Consider the following 245-residue polypeptide: 1-(5-phosphoribosyl)-5-[(5-phosphoribosylamino)methylideneamino] imidazole-4-carboxamide isomerase (245 aa).

D7 (proton acceptor) is an active-site residue. The active-site Proton donor is D129.

Belongs to the HisA/HisF family.

Its subcellular location is the cytoplasm. The catalysed reaction is 1-(5-phospho-beta-D-ribosyl)-5-[(5-phospho-beta-D-ribosylamino)methylideneamino]imidazole-4-carboxamide = 5-[(5-phospho-1-deoxy-D-ribulos-1-ylimino)methylamino]-1-(5-phospho-beta-D-ribosyl)imidazole-4-carboxamide. Its pathway is amino-acid biosynthesis; L-histidine biosynthesis; L-histidine from 5-phospho-alpha-D-ribose 1-diphosphate: step 4/9. In Tolumonas auensis (strain DSM 9187 / NBRC 110442 / TA 4), this protein is 1-(5-phosphoribosyl)-5-[(5-phosphoribosylamino)methylideneamino] imidazole-4-carboxamide isomerase.